Consider the following 511-residue polypeptide: uncharacterized protein (511 aa).

Residues 59–79 (VPVAANDDQPDGSRQSVRGRQ) form a disordered region.

This sequence belongs to the transposase 25 family.

This is an uncharacterized protein from Sinorhizobium fredii (strain NBRC 101917 / NGR234).